The chain runs to 145 residues: Putative pre-16S rRNA nuclease (145 aa).

The protein belongs to the YqgF nuclease family.

The protein localises to the cytoplasm. In terms of biological role, could be a nuclease involved in processing of the 5'-end of pre-16S rRNA. The chain is Putative pre-16S rRNA nuclease from Tropheryma whipplei (strain Twist) (Whipple's bacillus).